A 344-amino-acid chain; its full sequence is Exopolyphosphatase 1 (344 aa).

The disordered stretch occupies residues 319–344 (VHTSVRAVGGQPADRNAANRSRGSKP).

Belongs to the GppA/Ppx family. In terms of assembly, homodimer.

It carries out the reaction [phosphate](n) + H2O = [phosphate](n-1) + phosphate + H(+). Its function is as follows. Degradation of inorganic polyphosphates (polyP). Releases orthophosphate processively from the ends of the polyP chain. In Mycobacterium bovis (strain ATCC BAA-935 / AF2122/97), this protein is Exopolyphosphatase 1.